We begin with the raw amino-acid sequence, 510 residues long: tRNA(Ile)-lysidine synthase (510 aa).

32–37 (SGGLDS) serves as a coordination point for ATP.

Belongs to the tRNA(Ile)-lysidine synthase family.

The protein resides in the cytoplasm. It carries out the reaction cytidine(34) in tRNA(Ile2) + L-lysine + ATP = lysidine(34) in tRNA(Ile2) + AMP + diphosphate + H(+). Ligates lysine onto the cytidine present at position 34 of the AUA codon-specific tRNA(Ile) that contains the anticodon CAU, in an ATP-dependent manner. Cytidine is converted to lysidine, thus changing the amino acid specificity of the tRNA from methionine to isoleucine. This Blochmanniella pennsylvanica (strain BPEN) protein is tRNA(Ile)-lysidine synthase.